The sequence spans 190 residues: Pyridoxal 5'-phosphate synthase subunit PdxT (190 aa).

An L-glutamine-binding site is contributed by glycine 46–serine 48. Cysteine 78 (nucleophile) is an active-site residue. L-glutamine contacts are provided by residues arginine 108 and isoleucine 137–arginine 138. Active-site charge relay system residues include histidine 174 and glutamate 176.

It belongs to the glutaminase PdxT/SNO family. In the presence of PdxS, forms a dodecamer of heterodimers. Only shows activity in the heterodimer.

It catalyses the reaction aldehydo-D-ribose 5-phosphate + D-glyceraldehyde 3-phosphate + L-glutamine = pyridoxal 5'-phosphate + L-glutamate + phosphate + 3 H2O + H(+). It carries out the reaction L-glutamine + H2O = L-glutamate + NH4(+). It functions in the pathway cofactor biosynthesis; pyridoxal 5'-phosphate biosynthesis. Functionally, catalyzes the hydrolysis of glutamine to glutamate and ammonia as part of the biosynthesis of pyridoxal 5'-phosphate. The resulting ammonia molecule is channeled to the active site of PdxS. The polypeptide is Pyridoxal 5'-phosphate synthase subunit PdxT (Herpetosiphon aurantiacus (strain ATCC 23779 / DSM 785 / 114-95)).